Reading from the N-terminus, the 271-residue chain is MPELPEVETALRGISPYLKNFTIEKVVVRQPKLRWAVSEELITLKNVKIVDLTRRAKYLIIHTEKGYIIGHLGMSGSVRIVPQNSAIDKHDHIDIVMNNGKLLRYNDPRRFGAWLWTENLDDFHLFLKLGPEPLSDEFNAEYLFKKSRQKSTALKTFLMDNAVVVGVGNIYANESLFICGIHPLKLAKNLTLNQCFSLVNTIKDVLRKAIIQGGTTLKDFLQPDGRPGYFAQELLVYGNKDKPCPKCGGKIESLIIGQRNSFFCPKCQKRG.

Pro-2 (schiff-base intermediate with DNA) is an active-site residue. The active-site Proton donor is the Glu-3. The active-site Proton donor; for beta-elimination activity is the Lys-57. His-90, Arg-109, and Lys-150 together coordinate DNA. The segment at 235-269 (LVYGNKDKPCPKCGGKIESLIIGQRNSFFCPKCQK) adopts an FPG-type zinc-finger fold. Arg-259 functions as the Proton donor; for delta-elimination activity in the catalytic mechanism.

This sequence belongs to the FPG family. In terms of assembly, monomer. Requires Zn(2+) as cofactor.

The catalysed reaction is Hydrolysis of DNA containing ring-opened 7-methylguanine residues, releasing 2,6-diamino-4-hydroxy-5-(N-methyl)formamidopyrimidine.. It carries out the reaction 2'-deoxyribonucleotide-(2'-deoxyribose 5'-phosphate)-2'-deoxyribonucleotide-DNA = a 3'-end 2'-deoxyribonucleotide-(2,3-dehydro-2,3-deoxyribose 5'-phosphate)-DNA + a 5'-end 5'-phospho-2'-deoxyribonucleoside-DNA + H(+). Its function is as follows. Involved in base excision repair of DNA damaged by oxidation or by mutagenic agents. Acts as a DNA glycosylase that recognizes and removes damaged bases. Has a preference for oxidized purines, such as 7,8-dihydro-8-oxoguanine (8-oxoG). Has AP (apurinic/apyrimidinic) lyase activity and introduces nicks in the DNA strand. Cleaves the DNA backbone by beta-delta elimination to generate a single-strand break at the site of the removed base with both 3'- and 5'-phosphates. The polypeptide is Formamidopyrimidine-DNA glycosylase (Haemophilus influenzae (strain PittEE)).